A 354-amino-acid polypeptide reads, in one-letter code: Type II secretion system protein K (354 aa).

A propeptide spans 1 to 7 (leader sequence); sequence MSRRQRG. The chain crosses the membrane as a helical span at residues 8 to 28; it reads VALLIVMLMLSLMVTIAASIT. Topologically, residues 29-354 are periplasmic; it reads ERSGKAWQRT…QYGGYRTVNP (326 aa). The disordered stretch occupies residues 114–151; it reads NVTPNNASGNNTSGNNNAANGSSGNGNSPQPPKVGTSE. Over residues 118–141 the composition is skewed to low complexity; sequence NNASGNNTSGNNNAANGSSGNGNS.

The protein belongs to the GSP K family. As to quaternary structure, type II secretion is composed of four main components: the outer membrane complex, the inner membrane complex, the cytoplasmic secretion ATPase and the periplasm-spanning pseudopilus. Interacts with core component OutG. Cleaved by prepilin peptidase.

Its subcellular location is the cell inner membrane. Functionally, component of the type II secretion system required for the energy-dependent secretion of extracellular factors such as proteases and toxins from the periplasm. Plays a role in pseudopilus assembly and seems to control its length. Interacts with the pseudopilus tip complex that is critical for the recognition and binding of secretion substrates. This chain is Type II secretion system protein K (outK), found in Dickeya chrysanthemi (Pectobacterium chrysanthemi).